The sequence spans 196 residues: Beta-crystallin A4 (196 aa).

At Thr-2 the chain carries N-acetylthreonine. The interval Thr-2–His-11 is N-terminal arm. Beta/gamma crystallin 'Greek key' domains lie at Trp-12 to Ser-51 and Gly-52 to Ala-98. The tract at residues Cys-99–Asp-104 is connecting peptide. 2 Beta/gamma crystallin 'Greek key' domains span residues Ser-105–Ser-146 and Gly-147–Gln-195.

As to quaternary structure, homo/heterodimer, or complexes of higher-order. The structure of beta-crystallin oligomers seems to be stabilized through interactions between the N-terminal arms.

Functionally, crystallins are the dominant structural components of the vertebrate eye lens. The chain is Beta-crystallin A4 (Cryba4) from Rattus norvegicus (Rat).